Here is a 166-residue protein sequence, read N- to C-terminus: 3-isopropylmalate dehydratase small subunit (166 aa).

Belongs to the LeuD family. LeuD type 2 subfamily. In terms of assembly, heterodimer of LeuC and LeuD.

The enzyme catalyses (2R,3S)-3-isopropylmalate = (2S)-2-isopropylmalate. It participates in amino-acid biosynthesis; L-leucine biosynthesis; L-leucine from 3-methyl-2-oxobutanoate: step 2/4. Functionally, catalyzes the isomerization between 2-isopropylmalate and 3-isopropylmalate, via the formation of 2-isopropylmaleate. The polypeptide is 3-isopropylmalate dehydratase small subunit (Nautilia profundicola (strain ATCC BAA-1463 / DSM 18972 / AmH)).